Here is a 606-residue protein sequence, read N- to C-terminus: UvrABC system protein C (606 aa).

One can recognise a GIY-YIG domain in the interval 19–97; the sequence is QSCGVYQMIG…IKSLKPPYNI (79 aa). The UVR domain occupies 207–242; that stretch reads EKVKKQLSSTMEKCSKEENYELAAIYRDRLKFLEQI.

Belongs to the UvrC family. In terms of assembly, interacts with UvrB in an incision complex.

The protein localises to the cytoplasm. Its function is as follows. The UvrABC repair system catalyzes the recognition and processing of DNA lesions. UvrC both incises the 5' and 3' sides of the lesion. The N-terminal half is responsible for the 3' incision and the C-terminal half is responsible for the 5' incision. In Wolbachia sp. subsp. Brugia malayi (strain TRS), this protein is UvrABC system protein C.